Consider the following 1085-residue polypeptide: DNA repair and recombination protein RAD26 (1085 aa).

Ser30 is modified (phosphoserine). Disordered stretches follow at residues 118 to 141 and 190 to 219; these read KEQV…GETE and NLTD…EEND. Basic and acidic residues predominate over residues 128–141; it reads KGSKEGLQRPGETE. Acidic residues predominate over residues 210–219; it reads SEDDEEEEND. The Helicase ATP-binding domain occupies 309–518; the sequence is YELYQQNCGG…WSLFDFIFPG (210 aa). 322–329 provides a ligand contact to ATP; it reads DEMGLGKT. The DEGH box signature appears at 469 to 472; it reads DEGH. One can recognise a Helicase C-terminal domain in the interval 655–818; that stretch reads VVKQLLLLWH…KRFFKIHELH (164 aa).

The protein belongs to the SNF2/RAD54 helicase family.

It is found in the nucleus. It catalyses the reaction ATP + H2O = ADP + phosphate + H(+). In terms of biological role, may be involved in the preferential repair of active genes. The polypeptide is DNA repair and recombination protein RAD26 (RAD26) (Saccharomyces cerevisiae (strain ATCC 204508 / S288c) (Baker's yeast)).